The chain runs to 97 residues: Large ribosomal subunit protein bL28 (97 aa).

The protein belongs to the bacterial ribosomal protein bL28 family.

This is Large ribosomal subunit protein bL28 from Rickettsia typhi (strain ATCC VR-144 / Wilmington).